The primary structure comprises 467 residues: Probable amino acid permease 7 (467 aa).

The Cytoplasmic segment spans residues 1–29 (MDIKEDDESRVITPTELQLHDSVTARTGT). Residues 30–50 (LWTAVAHIITGVIGAGVLSLA) form a helical membrane-spanning segment. Over 51–58 (WATAELGW) the chain is Extracellular. Residues 59–79 (IAGPAALIAFAGVTLLSAFLL) form a helical membrane-spanning segment. The Cytoplasmic portion of the chain corresponds to 80–111 (SDCYRFPDPNNGPLRLNSYSQAVKLYLGKKNE). Residues 112-132 (IVCGVVVYISLFGCGIAYTIV) form a helical membrane-spanning segment. Over 133–163 (IATCSRAIMKSNCYHRNGHNATCSYGDNNNY) the chain is Extracellular. 2 helical membrane passes run 164-184 (FMVL…FHNM) and 185-205 (VWLS…GIGL). At 206-231 (ALGKIIENRKIEGSIRGIPAENRGEK) the chain is on the extracellular side. Residues 232-252 (VWIVFQALGNIAFSYPFSIIL) traverse the membrane as a helical segment. At 253 to 274 (LEIQDTLRSPPAEKQTMKKAST) the chain is on the cytoplasmic side. Residues 275–295 (VAVFIQTFFFFCCGCFGYAAF) traverse the membrane as a helical segment. Over 296–312 (GDSTPGNLLTGFGFYEP) the chain is Extracellular. Residues 313 to 333 (FWLVDFANACIVLHLVGGYQV) form a helical membrane-spanning segment. At 334–383 (YSQPIFAAAERSLTKKYPENKFIARFYGFKLPLLRGETVRLNPMRMCLRT) the chain is on the cytoplasmic side. 2 helical membrane passes run 384–404 (MYVL…EVLG) and 405–425 (VVGA…MCIL). Topologically, residues 426–443 (QKKIRSWTRPWLLLRGFS) are cytoplasmic. The chain crosses the membrane as a helical span at residues 444 to 464 (FVCLLVCLLSLVGSIYGLVGA). The Extracellular portion of the chain corresponds to 465 to 467 (KFG).

Belongs to the amino acid/polyamine transporter 2 family. Amino acid/auxin permease (AAAP) (TC 2.A.18.2) subfamily.

The protein localises to the cell membrane. Amino acid-proton symporter. Stereospecific transporter with a broad specificity for neutral amino acids. The polypeptide is Probable amino acid permease 7 (AAP7) (Arabidopsis thaliana (Mouse-ear cress)).